The sequence spans 449 residues: Exodeoxyribonuclease 7 large subunit (449 aa).

Belongs to the XseA family. Heterooligomer composed of large and small subunits.

The protein resides in the cytoplasm. The catalysed reaction is Exonucleolytic cleavage in either 5'- to 3'- or 3'- to 5'-direction to yield nucleoside 5'-phosphates.. In terms of biological role, bidirectionally degrades single-stranded DNA into large acid-insoluble oligonucleotides, which are then degraded further into small acid-soluble oligonucleotides. The polypeptide is Exodeoxyribonuclease 7 large subunit (Salmonella dublin (strain CT_02021853)).